Consider the following 197-residue polypeptide: MAASQVDQKRALNKLKHDLEPFRTAIVGAYGVLTWEKQYYAGVVFGVISCLYLVLWYLDLSLITLLSLLGVISILLNYAFPMVSRLIFGGVNWDGDQEAKFEDVCGQVCAVKGSLVVWYEYLFNERKSTVFVIVMSLGLLAMAWIGAIINNLLLMYLATLLILMWPGLQNKDIFKAITQRASKIINEKIQCGKRKLQ.

The next 4 helical transmembrane spans lie at valine 43 to isoleucine 63, threonine 64 to serine 84, threonine 129 to isoleucine 149, and asparagine 150 to asparagine 170.

The protein belongs to the ARL6ip family.

It localises to the membrane. This chain is ADP-ribosylation factor-like protein 6-interacting protein 1, found in Drosophila melanogaster (Fruit fly).